Consider the following 390-residue polypeptide: MSNTWKIYILAIVSFLVGTSEYIISGILDQIAHTLGITLAAAGQLITIFSLVYALSTPVLMALTASMDRRKLMMYALGLFVFGNVLAFVLPGYGWFIAARIIMAMGAGVVVVTALTIAAKIASEGKQGSAIATVVMGFTASLIIGVPLGRMIAVALGWKSVFGAIALLGLIAMVVIFFTLPYTEGDKPVPLLQQLALFKKRKVAMGLSITFFWLGGYSVAYTYLSPYLLNISGINGKLLSGVLLIFGIASLVGSKFGGYSTDKWGVPFTLVGGMTLHIVTLILLSLVTHSYIGVLVILILWSFAAWSTGPTQQFHLATIEPEMSGVLLSMNQSMMQFAMAVGAGIGGVFVENVSLASITWVGALGVMIAIIASLLIFNSQPKQALKDINQ.

11 helical membrane-spanning segments follow: residues 7–27 (IYILAIVSFLVGTSEYIISGI), 35–55 (LGITLAAAGQLITIFSLVYAL), 77–97 (LGLFVFGNVLAFVLPGYGWFI), 101–121 (IIMAMGAGVVVVTALTIAAKI), 128–148 (GSAIATVVMGFTASLIIGVPL), 161–181 (VFGAIALLGLIAMVVIFFTLP), 203–223 (VAMGLSITFFWLGGYSVAYTY), 238–258 (LLSGVLLIFGIASLVGSKFGG), 281–301 (LILLSLVTHSYIGVLVILILW), 335–355 (MQFAMAVGAGIGGVFVENVSL), and 357–377 (SITWVGALGVMIAIIASLLIF).

This sequence belongs to the major facilitator superfamily.

Its subcellular location is the cell membrane. This is an uncharacterized protein from Bacillus subtilis (strain 168).